Here is a 62-residue protein sequence, read N- to C-terminus: DNA-directed RNA polymerase subunit Rpo10 (62 aa).

The Zn(2+) site is built by Cys6, Cys9, Cys43, and Cys44.

It belongs to the archaeal Rpo10/eukaryotic RPB10 RNA polymerase subunit family. In terms of assembly, part of the RNA polymerase complex. Zn(2+) serves as cofactor.

The protein resides in the cytoplasm. It carries out the reaction RNA(n) + a ribonucleoside 5'-triphosphate = RNA(n+1) + diphosphate. Its function is as follows. DNA-dependent RNA polymerase (RNAP) catalyzes the transcription of DNA into RNA using the four ribonucleoside triphosphates as substrates. This Methanosarcina acetivorans (strain ATCC 35395 / DSM 2834 / JCM 12185 / C2A) protein is DNA-directed RNA polymerase subunit Rpo10.